Here is a 167-residue protein sequence, read N- to C-terminus: Telethonin (167 aa).

The residue at position 39 (Ser-39) is a Phosphoserine. Residues 142 to 167 (PVVPVSKPGPLRRTLSRSMSQEAQRG) are disordered. Positions 157 to 167 (SRSMSQEAQRG) are enriched in polar residues.

In terms of assembly, interacts with MYOZ1, MYOZ2 and MYOZ3. Interacts with CSRP3. Interacts directly with the N-terminal Ig-like domains of 2 titin (TTN) molecules. Interacts with ANKRD2; the interaction is direct.

Its subcellular location is the cytoplasm. It localises to the myofibril. The protein resides in the sarcomere. Functionally, muscle assembly regulating factor. Mediates the antiparallel assembly of titin (TTN) molecules at the sarcomeric Z-disk. The chain is Telethonin (Tcap) from Mus musculus (Mouse).